A 373-amino-acid chain; its full sequence is Maltose/maltodextrin import ATP-binding protein MalK (373 aa).

Positions 4–234 (VTLKNVCKAY…PQNRFVAGFI (231 aa)) constitute an ABC transporter domain. 36-43 (GPSGCGKS) contributes to the ATP binding site.

It belongs to the ABC transporter superfamily. Maltooligosaccharide importer (TC 3.A.1.1.1) family. As to quaternary structure, the complex is composed of two ATP-binding proteins (MalK), two transmembrane proteins (MalG and MalK) and a solute-binding protein (MalE).

The protein localises to the cell inner membrane. It catalyses the reaction D-maltose(out) + ATP + H2O = D-maltose(in) + ADP + phosphate + H(+). Its function is as follows. Part of the ABC transporter complex MalEFGK involved in maltose/maltodextrin import. Responsible for energy coupling to the transport system. The polypeptide is Maltose/maltodextrin import ATP-binding protein MalK (Vibrio cholerae serotype O1 (strain ATCC 39315 / El Tor Inaba N16961)).